We begin with the raw amino-acid sequence, 434 residues long: Trigger factor (434 aa).

One can recognise a PPIase FKBP-type domain in the interval glycine 161–proline 246.

The protein belongs to the FKBP-type PPIase family. Tig subfamily.

Its subcellular location is the cytoplasm. The catalysed reaction is [protein]-peptidylproline (omega=180) = [protein]-peptidylproline (omega=0). Functionally, involved in protein export. Acts as a chaperone by maintaining the newly synthesized protein in an open conformation. Functions as a peptidyl-prolyl cis-trans isomerase. This Aromatoleum aromaticum (strain DSM 19018 / LMG 30748 / EbN1) (Azoarcus sp. (strain EbN1)) protein is Trigger factor.